Reading from the N-terminus, the 477-residue chain is Glutamate--tRNA ligase (477 aa).

Positions P8–T18 match the 'HIGH' region motif. The 'KMSKS' region motif lies at K247–R251. Residue K250 coordinates ATP.

This sequence belongs to the class-I aminoacyl-tRNA synthetase family. Glutamate--tRNA ligase type 1 subfamily. As to quaternary structure, monomer.

The protein localises to the cytoplasm. It catalyses the reaction tRNA(Glu) + L-glutamate + ATP = L-glutamyl-tRNA(Glu) + AMP + diphosphate. Catalyzes the attachment of glutamate to tRNA(Glu) in a two-step reaction: glutamate is first activated by ATP to form Glu-AMP and then transferred to the acceptor end of tRNA(Glu). This is Glutamate--tRNA ligase from Synechococcus sp. (strain CC9605).